We begin with the raw amino-acid sequence, 248 residues long: Isoprenyl transferase (248 aa).

Asp23 is an active-site residue. Asp23 is a Mg(2+) binding site. Residues 24 to 27, Trp28, Arg36, His40, and 68 to 70 contribute to the substrate site; these read GNGR and STE. The active-site Proton acceptor is the Asn71. Substrate-binding positions include Trp72, Arg74, Arg185, and 191–193; that span reads RIS. Residue Glu204 coordinates Mg(2+).

The protein belongs to the UPP synthase family. In terms of assembly, homodimer. The cofactor is Mg(2+).

Its function is as follows. Catalyzes the condensation of isopentenyl diphosphate (IPP) with allylic pyrophosphates generating different type of terpenoids. The polypeptide is Isoprenyl transferase (Neisseria meningitidis serogroup B (strain ATCC BAA-335 / MC58)).